We begin with the raw amino-acid sequence, 192 residues long: uncharacterized protein (192 aa).

One can recognise a Nudix hydrolase domain in the interval 29-160 (QRQAAVLIPV…PLDVYRRGNS (132 aa)). Positions 67-89 (GAVDSTDASLIAAALREAQEEVA) match the Nudix box motif. 2 residues coordinate Mg(2+): E83 and E87.

The protein belongs to the Nudix hydrolase family. PCD1 subfamily. Mn(2+) is required as a cofactor. Requires Mg(2+) as cofactor.

Probably mediates the hydrolysis of some nucleoside diphosphate derivatives. This is an uncharacterized protein from Salmonella agona (strain SL483).